The chain runs to 904 residues: Alpha-actinin-4 (904 aa).

A disordered region spans residues 1-27; it reads MVDYHSAGQPYPYGGNGPGPNGDYMAQ. The interval 1 to 259 is actin-binding; sequence MVDYHSAGQP…IMTYVSSFYH (259 aa). 2 Calponin-homology (CH) domains span residues 43–147 and 156–262; these read KQQR…LRFA and TSAK…HAFS. Spectrin repeat units follow at residues 286 to 396, 406 to 511, 521 to 632, and 642 to 745; these read HLME…WLLN, HLAE…ALEK, ELHL…ALQD, and RLRR…EVEN. EF-hand domains follow at residues 758-793 and 799-834; these read EQMQ…LGYD and QGDA…ETTD. D771, D773, E782, D812, N814, S816, and S818 together coordinate Ca(2+).

It belongs to the alpha-actinin family. In terms of assembly, homodimer; antiparallel. Component of the CART complex. May interact with nuclear receptors.

Its subcellular location is the nucleus. The protein localises to the cytoplasm. It is found in the cell junction. It localises to the perinuclear region. Its function is as follows. F-actin cross-linking protein which is thought to anchor actin to a variety of intracellular structures. This is a bundling protein. Probably involved in vesicular trafficking via its association with the CART complex. Involved in tight junction assembly in epithelial cells. May also function as a transcriptional coactivator, stimulating transcription mediated by nuclear hormone receptors. This is Alpha-actinin-4 from Gallus gallus (Chicken).